The chain runs to 219 residues: Translation initiation factor IF-3 (219 aa).

This sequence belongs to the IF-3 family. As to quaternary structure, monomer.

The protein resides in the cytoplasm. IF-3 binds to the 30S ribosomal subunit and shifts the equilibrium between 70S ribosomes and their 50S and 30S subunits in favor of the free subunits, thus enhancing the availability of 30S subunits on which protein synthesis initiation begins. This chain is Translation initiation factor IF-3, found in Prochlorococcus marinus (strain MIT 9313).